Consider the following 196-residue polypeptide: 3-isopropylmalate dehydratase small subunit (196 aa).

This sequence belongs to the LeuD family. LeuD type 1 subfamily. Heterodimer of LeuC and LeuD.

The catalysed reaction is (2R,3S)-3-isopropylmalate = (2S)-2-isopropylmalate. It participates in amino-acid biosynthesis; L-leucine biosynthesis; L-leucine from 3-methyl-2-oxobutanoate: step 2/4. Its function is as follows. Catalyzes the isomerization between 2-isopropylmalate and 3-isopropylmalate, via the formation of 2-isopropylmaleate. This chain is 3-isopropylmalate dehydratase small subunit, found in Streptococcus thermophilus (strain CNRZ 1066).